The chain runs to 416 residues: Serine hydroxymethyltransferase (416 aa).

(6S)-5,6,7,8-tetrahydrofolate-binding positions include Leu-119 and 123–125; that span reads GHL. N6-(pyridoxal phosphate)lysine is present on Lys-228.

The protein belongs to the SHMT family. As to quaternary structure, homodimer. It depends on pyridoxal 5'-phosphate as a cofactor.

It localises to the cytoplasm. It carries out the reaction (6R)-5,10-methylene-5,6,7,8-tetrahydrofolate + glycine + H2O = (6S)-5,6,7,8-tetrahydrofolate + L-serine. Its pathway is one-carbon metabolism; tetrahydrofolate interconversion. It participates in amino-acid biosynthesis; glycine biosynthesis; glycine from L-serine: step 1/1. Catalyzes the reversible interconversion of serine and glycine with tetrahydrofolate (THF) serving as the one-carbon carrier. This reaction serves as the major source of one-carbon groups required for the biosynthesis of purines, thymidylate, methionine, and other important biomolecules. Also exhibits THF-independent aldolase activity toward beta-hydroxyamino acids, producing glycine and aldehydes, via a retro-aldol mechanism. The sequence is that of Serine hydroxymethyltransferase from Moorella thermoacetica (strain ATCC 39073 / JCM 9320).